Consider the following 50-residue polypeptide: Large ribosomal subunit protein bL33 (50 aa).

It belongs to the bacterial ribosomal protein bL33 family.

In Citrifermentans bemidjiense (strain ATCC BAA-1014 / DSM 16622 / JCM 12645 / Bem) (Geobacter bemidjiensis), this protein is Large ribosomal subunit protein bL33.